Here is a 688-residue protein sequence, read N- to C-terminus: Methionine--tRNA ligase (688 aa).

Positions 13-23 (PYANGNFHIGH) match the 'HIGH' region motif. Zn(2+) is bound by residues C144, C147, C157, and C160. Positions 342–346 (KMSKS) match the 'KMSKS' region motif. Position 345 (K345) interacts with ATP. A tRNA-binding domain is found at 582 to 688 (DFAKVDLRIA…PGAQPGMRIH (107 aa)).

Belongs to the class-I aminoacyl-tRNA synthetase family. MetG type 1 subfamily. Homodimer. It depends on Zn(2+) as a cofactor.

Its subcellular location is the cytoplasm. It carries out the reaction tRNA(Met) + L-methionine + ATP = L-methionyl-tRNA(Met) + AMP + diphosphate. Its function is as follows. Is required not only for elongation of protein synthesis but also for the initiation of all mRNA translation through initiator tRNA(fMet) aminoacylation. The chain is Methionine--tRNA ligase from Acidovorax ebreus (strain TPSY) (Diaphorobacter sp. (strain TPSY)).